The primary structure comprises 176 residues: HTH-type transcriptional regulator DctR (176 aa).

An HTH luxR-type domain is found at 109–174; that stretch reads VPEANVSLSR…ELVRHQHIDY (66 aa). A DNA-binding region (H-T-H motif) is located at residues 133–152; that stretch reads TEDILEKLKISLKTFYCHKH.

In terms of biological role, may act as a transcriptional regulator of dctA. This chain is HTH-type transcriptional regulator DctR (dctR), found in Shigella flexneri.